The chain runs to 288 residues: MEIKLEQLGYCYQKNSPFEKRALLDVNVSFDSGSYSAIIGHTGSGKSTLLQHLNALLMPTEGKITVGEREIVAGVKQKKLRDLRKKVGIVFQFPEAQLFEETVEKDICFGPMNFGVSEEDAKLRAKKVIYEVGLTEEILSRSPFELSGGQMRRVAIAGVLAMDPEVLVLDEPTAGLDPHGREEIMEMFYNLHKEKGLTTVLVTHSMEDAARYAEKIVLMKAGTVLQIGSPREIFAKPDALVDLGLSVPDVVRFQGLFERKFNVKLTKTCLTIAELITEMAPYLAKGGA.

The region spanning 3–246 (IKLEQLGYCY…PDALVDLGLS (244 aa)) is the ABC transporter domain. Residue 40-47 (GHTGSGKS) coordinates ATP.

It belongs to the ABC transporter superfamily. Energy-coupling factor EcfA family. In terms of assembly, forms a stable energy-coupling factor (ECF) transporter complex composed of 2 membrane-embedded substrate-binding proteins (S component), 2 ATP-binding proteins (A component) and 2 transmembrane proteins (T component).

The protein resides in the cell membrane. Its function is as follows. ATP-binding (A) component of a common energy-coupling factor (ECF) ABC-transporter complex. Unlike classic ABC transporters this ECF transporter provides the energy necessary to transport a number of different substrates. This chain is Energy-coupling factor transporter ATP-binding protein EcfA2, found in Listeria welshimeri serovar 6b (strain ATCC 35897 / DSM 20650 / CCUG 15529 / CIP 8149 / NCTC 11857 / SLCC 5334 / V8).